The chain runs to 153 residues: Vasotocin-neurophysin VT 1 (153 aa).

The N-terminal stretch at 1–19 is a signal peptide; that stretch reads MPQCALLLSLLGLLALSSA. C20 and C25 are oxidised to a cystine. A Glycine amide modification is found at G28. 7 cysteine pairs are disulfide-bonded: C41-C85, C44-C58, C52-C75, C59-C65, C92-C105, C99-C117, and C106-C111.

The protein belongs to the vasopressin/oxytocin family. Post-translationally, seven disulfide bonds are present in neurophysin.

It is found in the secreted. Functionally, vasotocin is probably an antidiuretic hormone. The chain is Vasotocin-neurophysin VT 1 from Takifugu rubripes (Japanese pufferfish).